The chain runs to 3242 residues: tRNA nuclease CdiA (3242 aa).

The N-terminal stretch at 1–32 is a signal peptide; it reads MHQPPVRFTYRLLSYLISTIIAGQPLLPAVGA. The two-partner system transport domain (TPS) stretch occupies residues 36 to 322; that stretch reads PQNGAGMDKA…AGGNLSVTGT (287 aa). Residues 351 to 1376 form an FHA-1 region; it reads GELTAGQNAM…IVVRTGHLLN (1026 aa). Residues 1377 to 1668 form a receptor-binding domain (RBD) region; sequence QREGFSATTT…TGQTGISDDW (292 aa). Positions 1668–1852 are YP domain; the sequence is WPLPSGNNGY…LSPEDITLHN (185 aa). The interval 1853–1913 is periplasmic FHA-1 repeat (pFR); that stretch reads GSVISGNNVQ…DLSAIGDISN (61 aa). The tract at residues 2021-2631 is FHA-2; the sequence is DNSASSTTSQ…TSKYDSKQTS (611 aa). Residues 2075-2091 are compositionally biased toward basic and acidic residues; it reads RESKNSRNGRSESHESH. Disordered stretches follow at residues 2075 to 2094, 2310 to 2333, and 2439 to 2481; these read RESK…HAAV, GSSK…STIG, and TMAS…NAGN. Polar residues predominate over residues 2322–2333; sequence GTTQSQSASTIG. Positions 2969-3242 are DUF638-CT domain; not toxic when added to the outside of E.coli, does not interfere with F-pilus mediated conjugation, toxic when expressed intracellularly; sequence GVDPSKLTED…IESALKGYGI (274 aa). The interval 2972–3015 is pre-toxin (PT) domain; sequence PSKLTEDQKQTVSTLATLSAGMAGGIASGDVAGAAAGAGAGKNV. The VENN CT cleavage motif motif lies at 3016 to 3019; the sequence is VENN. The toxin import domain; sufficient to import the tRNA nuclease domain of colicin E5 into E.coli, may bind F-pili stretch occupies residues 3016-3097; sequence VENNALSLVA…KYLSSLHDKY (82 aa). Positions 3016-3242 are CT domain; toxic when added to the outside of E.coli and when expressed intracellularly; it reads VENNALSLVA…IESALKGYGI (227 aa). The inner membrane translocation domain (IMTD), targets protein to FtsH stretch occupies residues 3020–3141; it reads ALSLVARGCA…SENDPKQQNE (122 aa). A C-terminal effector domain (CT) region spans residues 3020 to 3242; sequence ALSLVARGCA…IESALKGYGI (223 aa). The segment at 3098–3242 is tRNase function, does not interfere with F-pilus mediated conjugation; that stretch reads GSGAASNPNI…IESALKGYGI (145 aa). The segment at 3116-3146 is disordered; the sequence is KVELGGSGSGTGTPPPSENDPKQQNEKTVDK. A compositionally biased stretch (basic and acidic residues) spans 3134-3146; that stretch reads NDPKQQNEKTVDK. The stretch at 3137–3238 forms a coiled coil; the sequence is KQQNEKTVDK…AINKIESALK (102 aa). Catalysis depends on residues Asp-3170, His-3193, and Glu-3196.

This sequence in the N-terminal section; belongs to the CdiA toxin family. As to quaternary structure, the C-terminal (CT) domain interacts with cognate CdiI but not non-cognate CdiI from D.dadantii strain 3937. CdiA-CT also interacts with CysK; this is blocked upon preincubation with O-acetyl-L-serine. CysK forms a complex with CdiA-CT/CdiI. One CdiA toxin subunit binds to each subunit of the CysK homodimer, and one CdiI immunity protein binds to each toxin subunit; the immune complex is thus a dimer of trimers. The 4 C-terminal residues of CdiA fit into the active site of CysK. It depends on a divalent metal cation as a cofactor.

It localises to the secreted. The protein resides in the target cell membrane. The protein localises to the target cell. It is found in the target cell cytoplasm. In terms of biological role, toxic component of a toxin-immunity protein module, which functions as a cellular contact-dependent growth inhibition (CDI) system. CDI modules allow bacteria to communicate with and inhibit the growth of closely related neighboring bacteria in a contact-dependent fashion (target cell counts decrease 100- to 1000-fold). CdiA toxicity is neutralized by its cognate immunity protein CdiI, but not by CdiI from other bacteria. Uses heterotrimeric OmpC and OmpF as target cell outer membrane receptors; receptor function depends on polymorphisms in extracellular loops L4 and L5 of OmpC; interacts with itself and closely related bacteria but also with OmpC from E.cloacae ATCC 13047. Its ability to preferentially bind to 'self' receptors suggests it may also play a role in self-recognition and kin selection. A bamA mutation that decreases its expression about 5-fold is partially resistant to this strain of CdiA, probably due to decreased outer membrane receptor protein assembly. Isolated CdiA-CT is imported in an F-pilus-mediated fashion; CdiA-CT inhibits F-mediated conjugation, probably via its N-terminus (residues 3016-3097), although it is not clear if this is physiologically significant. Gains access to the cytoplasm of target cells by using integral inner membrane protein FtsH. The C-terminal domain (CT) cleaves within tRNA anticodon loops; this activity is inhibited by cognate CdiI. tRNase activity of CdiA-CT is stimulated by CysK, although the extreme C-terminus (residues 3098-3242) has tRNase activity in the absence of CysK. In vivo CDI toxicity requires CysK. CysK stabilizes CdiA-CT, allowing it to bind tRNA substrate; neither CdiA-CT nor CysK bind tRNA alone in vitro. Purified CdiA-CT (residues 3016-3242) inhibits E.coli cell growth when added to cultures alone or in complex with cognate CdiI, growth is inhibited when cognate CdiI is present within the cell but not when a CdiA-CT/CdiI complex is added extracellularly, suggesting CdiA-CT alone but not the CdiA-CT/CdiI complex is imported into the target cell. Its function is as follows. The CdiA protein is thought to be exported from the cell through the central lumen of CdiB, the other half of its two-partner system (TPS). The TPS domain probably remains associated with CdiB while the FHA-1 domain forms an extended filament with the receptor-binding domain (RBD) at its extremity; in the secretion arrested state the C-terminus of the RBD and YP domains form a hairpin-like structure as the FHA-2, PT and CT domains are periplasmic. The YP domain is probably responsible for this arrest at the point where it re-enters the host cell periplasm. Upon binding to a target cell outer membrane receptor (heterotrimeric OmpC-OmpF for this CDI) a signal is transmitted to activate secretion. The filament elongates slightly, the rest of CdiA is secreted and the FHA-2 domain becomes stably associated with the target cell's outer membrane where it facilitates entry of the toxic CT domain into the target cell periplasm. From there the toxic CT domain is cleaved and gains access to the target cell cytoplasm via an inner membrane protein (FtsH for this CDI). This chain is tRNA nuclease CdiA, found in Escherichia coli O6:K15:H31 (strain 536 / UPEC).